The primary structure comprises 520 residues: Diacylglycerol O-acyltransferase 1 (520 aa).

2 disordered regions span residues 28–57 (RRKS…GAPA) and 72–116 (QGTA…AHRR). The span at 34–54 (DSSNGLLLSGSDNNSPSDDVG) shows a compositional bias: low complexity. Gly residues predominate over residues 81-98 (NNGGGDNNGGGRGGGEGR). 7 helical membrane passes run 126–146 (AIFK…LIAV), 176–196 (WPLF…FTVE), 207–227 (PVVI…PVYV), 233–253 (SAFL…LKLV), 276–296 (VSYY…TLCY), 317–337 (KLVI…NPIV), and 365–385 (VWLC…AELL). An FYXDWWN motif motif is present at residues 392-398 (FYKDWWN). 3 helical membrane passes run 434-454 (LAII…IAVP), 457-477 (LFKL…FITN), and 487-507 (VGNM…CVLL). His-447 is a catalytic residue.

This sequence belongs to the membrane-bound acyltransferase family. Sterol o-acyltransferase subfamily. Interacts with LPCAT2 and LPAT2. Ubiquitous. Highest expression in young developing seeds.

Its subcellular location is the plastid. The protein localises to the chloroplast membrane. The protein resides in the endoplasmic reticulum membrane. It catalyses the reaction an acyl-CoA + a 1,2-diacyl-sn-glycerol = a triacyl-sn-glycerol + CoA. The catalysed reaction is 1,2-di-(9Z-octadecenoyl)-sn-glycerol + (9Z)-octadecenoyl-CoA = 1,2,3-tri-(9Z-octadecenoyl)-glycerol + CoA. Its pathway is glycerolipid metabolism; triacylglycerol biosynthesis. Its activity is regulated as follows. Partially inhibited by niacin. In terms of biological role, major contributor to triacylglycerol (TAG) synthesis and oil accumulation in seeds. Catalyzes the acylation of the sn-3 hydroxy group of sn-1,2-diacylglycerol using acyl-CoA. Can use palmitoyl-CoA and oleoyl-CoA as substrates. Can use oleoyl-CoA and linoleoyl-CoA as substrates. Has substrate preference for oleoyl-CoA compared to linoleoyl-CoA. Has complementary functions with PDAT1 that are essential for triacylglycerol synthesis and normal development of both seeds and pollen. In Arabidopsis thaliana (Mouse-ear cress), this protein is Diacylglycerol O-acyltransferase 1.